We begin with the raw amino-acid sequence, 556 residues long: Hydroxylamine reductase (556 aa).

4 residues coordinate [4Fe-4S] cluster: C4, C7, C19, and C26. Residues H252, E276, C320, C407, C435, C460, E494, and K496 each contribute to the hybrid [4Fe-2O-2S] cluster site. At C407 the chain carries Cysteine persulfide.

This sequence belongs to the HCP family. [4Fe-4S] cluster is required as a cofactor. It depends on hybrid [4Fe-2O-2S] cluster as a cofactor.

Its subcellular location is the cytoplasm. The catalysed reaction is A + NH4(+) + H2O = hydroxylamine + AH2 + H(+). In terms of biological role, catalyzes the reduction of hydroxylamine to form NH(3) and H(2)O. This chain is Hydroxylamine reductase, found in Acidithiobacillus ferridurans.